An 863-amino-acid chain; its full sequence is MARRSSFQSCQIISLFTFAVGVNICLGFTAHRIKRAEGWEEGPPTVLSDSPWTNISGSCKGRCFELQEAGPPDCRCDNLCKSYTSCCHDFDELCLKTARGWECTKDRCGEVRNEENACHCSEDCLARGDCCTNYQVVCKGESHWVDDDCEEIKAAECPAGFVRPPLIIFSVDGFRASYMKKGSKVMPNIEKLRSCGTHSPYMRPVYPTKTFPNLYTLATGLYPESHGIVGNSMYDPVFDATFHLRGREKFNHRWWGGQPLWITATKQGVKAGTFFWSVVIPHERRILTILQWLTLPDHERPSVYAFYSEQPDFSGHKYGPFGPEMTNPLREIDKIVGQLMDGLKQLKLHRCVNVIFVGDHGMEDVTCDRTEFLSNYLTNVDDITLVPGTLGRIRSKFSNNAKYDPKAIIANLTCKKPDQHFKPYLKQHLPKRLHYANNRRIEDIHLLVERRWHVARKPLDVYKKPSGKCFFQGDHGFDNKVNSMQTVFVGYGSTFKYKTKVPPFENIELYNVMCDLLGLKPAPNNGTHGSLNHLLRTNTFRPTMPEEVTRPNYPGIMYLQSDFDLGCTCDDKVEPKNKLDELNKRLHTKGSTEERHLLYGRPAVLYRTRYDILYHTDFESGYSEIFLMPLWTSYTVSKQAEVSSVPDHLTSCVRPDVRVSPSFSQNCLAYKNDKQMSYGFLFPPYLSSSPEAKYDAFLVTNMVPMYPAFKRVWNYFQRVLVKKYASERNGVNVISGPIFDYDYDGLHDTEDKIKQYVEGSSIPVPTHYYSIITSCLDFTQPADKCDGPLSVSSFILPHRPDNEESCNSSEDESKWVEELMKMHTARVRDIEHLTSLDFFRKTSRSYPEILTLKTYLHTYESEI.

Residues 1–27 form the signal peptide; that stretch reads MARRSSFQSCQIISLFTFAVGVNICLG. The propeptide at 28-35 is removed by furin; that stretch reads FTAHRIKR. A glycan (N-linked (GlcNAc...) asparagine) is linked at Asn-54. SMB domains lie at 55 to 98 and 99 to 143; these read ISGS…LKTA and RGWE…GESH. 10 disulfide bridges follow: Cys-59–Cys-76, Cys-63–Cys-94, Cys-74–Cys-87, Cys-80–Cys-86, Cys-103–Cys-120, Cys-108–Cys-138, Cys-118–Cys-131, Cys-124–Cys-130, Cys-149–Cys-195, and Cys-157–Cys-351. Positions 127–129 match the Cell attachment site motif; sequence RGD. A phosphodiesterase region spans residues 145 to 502; sequence VDDDCEEIKA…STFKYKTKVP (358 aa). The Zn(2+) site is built by Asp-172 and Thr-210. Thr-210 serves as the catalytic Nucleophile. 1-(9Z-octadecenoyl)-sn-glycero-3-phosphate is bound by residues Thr-210, Asn-231, and Asp-312. Positions 210, 231, and 312 each coordinate 1-hexadecanoyl-sn-glycero-3-phosphate. 1-tetradecanoyl-sn-glycerol 3-phosphate-binding residues include Thr-210, Asn-231, and Asp-312. Zn(2+)-binding residues include Asp-312, His-316, Asp-359, and His-360. Intrachain disulfides connect Cys-367–Cys-469, Cys-414–Cys-806, Cys-567–Cys-667, Cys-569–Cys-652, and Cys-775–Cys-785. The N-linked (GlcNAc...) asparagine glycan is linked to Asn-411. His-475 serves as a coordination point for Zn(2+). Residue His-475 participates in 1-(9Z-octadecenoyl)-sn-glycero-3-phosphate binding. Residue His-475 participates in 1-hexadecanoyl-sn-glycero-3-phosphate binding. His-475 contacts 1-tetradecanoyl-sn-glycerol 3-phosphate. An N-linked (GlcNAc...) asparagine glycan is attached at Asn-525. Residues 598–863 form a nuclease-like domain region; the sequence is LYGRPAVLYR…TYLHTYESEI (266 aa). Residues Asp-740, Asp-742, Asp-744, Leu-746, and Asp-748 each coordinate Ca(2+). The N-linked (GlcNAc...) asparagine glycan is linked to Asn-807. The segment at 830-851 is required for secretion; it reads IEHLTSLDFFRKTSRSYPEILT.

Belongs to the nucleotide pyrophosphatase/phosphodiesterase family. The cofactor is Zn(2+). It depends on Ca(2+) as a cofactor. In terms of processing, N-glycosylation, but not furin-cleavage, plays a critical role on secretion and on lysoPLD activity. The interdomain disulfide bond between Cys-414 and Cys-806 is essential for catalytic activity. Detected in blood plasma (at protein level). Predominantly expressed in brain, placenta, ovary, and small intestine. Expressed in a number of carcinomas such as hepatocellular and prostate carcinoma, neuroblastoma and non-small-cell lung cancer. Expressed in body fluids such as plasma, cerebral spinal fluid (CSF), saliva, follicular and amniotic fluids. Not detected in leukocytes. Isoform 1 is more highly expressed in peripheral tissues than in the central nervous system (CNS). Adipocytes only express isoform 1. Isoform 3 is more highly expressed in the brain than in peripheral tissues.

The protein resides in the secreted. The enzyme catalyses a 1-O-alkyl-sn-glycero-3-phosphoethanolamine + H2O = a 1-O-alkyl-sn-glycero-3-phosphate + ethanolamine + H(+). It catalyses the reaction a 1-acyl-sn-glycero-3-phosphoethanolamine + H2O = a 1-acyl-sn-glycero-3-phosphate + ethanolamine + H(+). It carries out the reaction 1-(9Z-octadecenoyl)-sn-glycero-3-phosphoethanolamine + H2O = 1-(9Z-octadecenoyl)-sn-glycero-3-phosphate + ethanolamine + H(+). The catalysed reaction is a 1-O-alkyl-sn-glycero-3-phosphocholine + H2O = a 1-O-alkyl-sn-glycero-3-phosphate + choline + H(+). The enzyme catalyses 1-O-(9Z-octadecenyl)-sn-glycero-3-phosphocholine + H2O = 1-O-(9Z-octadecenyl)-sn-glycero-3-phosphate + choline + H(+). It catalyses the reaction 1-O-hexadecyl-sn-glycero-3-phosphocholine + H2O = 1-O-hexadecyl-sn-glycero-3-phosphate + choline + H(+). It carries out the reaction a 1-O-(1Z-alkenyl)-sn-glycero-3-phosphocholine + H2O = a 1-O-(1Z-alkenyl)-sn-glycero-3-phosphate + choline + H(+). The catalysed reaction is a 1-acyl-sn-glycero-3-phosphocholine + H2O = a 1-acyl-sn-glycero-3-phosphate + choline + H(+). The enzyme catalyses 1-dodecanoyl-sn-glycero-3-phosphocholine + H2O = 1-dodecanoyl-sn-glycerol 3-phosphate + choline + H(+). It catalyses the reaction 1-(9Z-octadecenoyl)-sn-glycero-3-phosphocholine + H2O = 1-(9Z-octadecenoyl)-sn-glycero-3-phosphate + choline + H(+). It carries out the reaction 1-tetradecanoyl-sn-glycero-3-phosphocholine + H2O = 1-tetradecanoyl-sn-glycerol 3-phosphate + choline + H(+). The catalysed reaction is 1-decanoyl-sn-glycero-3-phosphocholine + H2O = 1-decanoyl-sn-glycero-3-phosphate + choline + H(+). The enzyme catalyses 1-octadecanoyl-sn-glycero-3-phosphocholine + H2O = 1-octadecanoyl-sn-glycero-3-phosphate + choline + H(+). It catalyses the reaction 1-hexadecanoyl-sn-glycero-3-phosphocholine + H2O = 1-hexadecanoyl-sn-glycero-3-phosphate + choline + H(+). It carries out the reaction 1-hexanoyl-sn-glycero-3-phosphocholine + H2O = 1-hexanoyl-sn-glycero-3-phosphate + choline + H(+). The catalysed reaction is 1-(9Z,12Z)-octadecadienoyl-sn-glycero-3-phosphocholine + H2O = 1-(9Z,12Z)-octadecadienoyl-sn-glycero-3-phosphate + choline + H(+). The enzyme catalyses sphing-4-enine-phosphocholine + H2O = sphing-4-enine 1-phosphate + choline + H(+). It catalyses the reaction 1-(5Z,8Z,11Z,14Z-eicosatetraenoyl)-sn-glycero-3-phosphocholine + H2O = 1-(5Z,8Z,11Z,14Z-eicosatetraenoyl)-sn-glycero-3-phosphate + choline + H(+). It carries out the reaction a 2-acyl-sn-glycero-3-phosphocholine + H2O = a 2-acyl-sn-glycerol 3-phosphate + choline + H(+). The catalysed reaction is a 1,2-diacyl-sn-glycero-3-phosphocholine + H2O = a 1,2-diacyl-sn-glycero-3-phosphate + choline + H(+). The enzyme catalyses 1,2-dioctanoyl-sn-glycero-3-phosphocholine + H2O = 1,2-dioctanoyl-sn-glycero-3-phosphate + choline + H(+). It catalyses the reaction 1,2-didecanoyl-sn-glycero-3-phosphocholine + H2O = 1,2-didecanoyl-sn-glycero-3-phosphate + choline + H(+). It carries out the reaction a 1-acyl-sn-glycero-3-phospho-L-serine + H2O = a 1-acyl-sn-glycero-3-phosphate + L-serine + H(+). The catalysed reaction is 1-(9Z-octadecenoyl)-sn-glycero-3-phospho-L-serine + H2O = 1-(9Z-octadecenoyl)-sn-glycero-3-phosphate + L-serine + H(+). The enzyme catalyses a 2-acyl-sn-glycero-3-phospho-L-serine + H2O = a 2-acyl-sn-glycerol 3-phosphate + L-serine + H(+). Inhibited by lysophosphatidic acid (LPA) and sphingosine-1-phosphate (S1P). Inhibited by EDTA and EGTA. Its function is as follows. Secreted lysophospholipase D that hydrolyzes lysophospholipids to produce the signaling molecule lysophosphatidic acid (LPA) in extracellular fluids. Its major substrate is lysophosphatidylcholine. Can also act on sphingosylphosphorylcholine producing sphingosine-1-phosphate, a modulator of cell motility. Can hydrolyze, in vitro, bis-pNPP, to some extent pNP-TMP, and barely ATP. Involved in several motility-related processes such as angiogenesis and neurite outgrowth. Acts as an angiogenic factor by stimulating migration of smooth muscle cells and microtubule formation. Stimulates migration of melanoma cells, probably via a pertussis toxin-sensitive G protein. May have a role in induction of parturition. Possible involvement in cell proliferation and adipose tissue development. Required for LPA production in activated platelets, cleaves the sn-1 lysophospholipids to generate sn-1 lysophosphatidic acids containing predominantly 18:2 and 20:4 fatty acids. Shows a preference for the sn-1 to the sn-2 isomer of 1-O-alkyl-sn-glycero-3-phosphocholine (lyso-PAF). The sequence is that of Autotaxin from Homo sapiens (Human).